Reading from the N-terminus, the 98-residue chain is NADH-ubiquinone oxidoreductase chain 4L (98 aa).

3 helical membrane-spanning segments follow: residues 1 to 21, 29 to 49, and 61 to 81; these read MSLT…GLLM, SLLC…ITIL, and IILL…LVMV.

It belongs to the complex I subunit 4L family. In terms of assembly, core subunit of respiratory chain NADH dehydrogenase (Complex I) which is composed of 45 different subunits.

It is found in the mitochondrion inner membrane. It carries out the reaction a ubiquinone + NADH + 5 H(+)(in) = a ubiquinol + NAD(+) + 4 H(+)(out). Functionally, core subunit of the mitochondrial membrane respiratory chain NADH dehydrogenase (Complex I) which catalyzes electron transfer from NADH through the respiratory chain, using ubiquinone as an electron acceptor. Part of the enzyme membrane arm which is embedded in the lipid bilayer and involved in proton translocation. This chain is NADH-ubiquinone oxidoreductase chain 4L (MT-ND4L), found in Mystacina tuberculata (New Zealand lesser short-tailed bat).